A 167-amino-acid polypeptide reads, in one-letter code: Ribosome maturation factor RimM (167 aa).

The region spanning 92-165 (EDTYYIADII…RITIDPIEGM (74 aa)) is the PRC barrel domain.

This sequence belongs to the RimM family. In terms of assembly, binds ribosomal protein uS19.

It localises to the cytoplasm. An accessory protein needed during the final step in the assembly of 30S ribosomal subunit, possibly for assembly of the head region. Essential for efficient processing of 16S rRNA. May be needed both before and after RbfA during the maturation of 16S rRNA. It has affinity for free ribosomal 30S subunits but not for 70S ribosomes. This is Ribosome maturation factor RimM from Alkaliphilus oremlandii (strain OhILAs) (Clostridium oremlandii (strain OhILAs)).